Here is a 104-residue protein sequence, read N- to C-terminus: MGQCRSANAEDAQEFSDVERAIETLIKNFHQYSVEGGKETLTPSELRDLVTQQLPHLMPSNCGLEEKIANLGSCNDSKLEFRSFWELIGEAAKSVKLERPVRGH.

Positions 27–61 (KNFHQYSVEGGKETLTPSELRDLVTQQLPHLMPSN) constitute an EF-hand domain.

Belongs to the S-100 family. As to quaternary structure, homodimer. Interacts with AGER. In terms of tissue distribution, expressed at highest levels in colon and at moderate levels in thymus, kidney, liver, small intestine, and lung. Low expression in heart and no expression is seen in brain, skeletal muscle, spleen, placenta and peripheral blood leukocytes.

The protein resides in the cytoplasm. In terms of biological role, modulates P53/TP53 protein levels, and thereby plays a role in the regulation of cell survival and apoptosis. Depending on the context, it can promote cell proliferation or apoptosis. Plays a role in the regulation of cell migration by modulating the levels of MMP2, a matrix protease that is under transcriptional control of P53/TP53. Does not bind calcium. This chain is Protein S100-A14 (S100A14), found in Homo sapiens (Human).